The chain runs to 522 residues: Na(+)/H(+) antiporter NhaB (522 aa).

Transmembrane regions (helical) follow at residues 25 to 45 (VFLV…GWLL), 49 to 69 (FIFT…GMLA), 87 to 107 (ILAN…IYFM), 128 to 162 (LSLA…FYGV), 201 to 221 (LMMH…VGEP), 237 to 257 (FFFR…VTCI), 302 to 322 (VFVG…VGLI), 356 to 376 (LVVF…APVI), 388 to 408 (LLLF…VFVA), 446 to 466 (ATPN…SPLI), and 476 to 496 (MALP…EYVL).

Belongs to the NhaB Na(+)/H(+) (TC 2.A.34) antiporter family.

It localises to the cell inner membrane. It carries out the reaction 2 Na(+)(in) + 3 H(+)(out) = 2 Na(+)(out) + 3 H(+)(in). In terms of biological role, na(+)/H(+) antiporter that extrudes sodium in exchange for external protons. This is Na(+)/H(+) antiporter NhaB from Actinobacillus succinogenes (strain ATCC 55618 / DSM 22257 / CCUG 43843 / 130Z).